The primary structure comprises 215 residues: RNA pyrophosphohydrolase (215 aa).

A Nudix hydrolase domain is found at 6–149; the sequence is GFRPNVGIIL…KRDVYQLALT (144 aa). A Nudix box motif is present at residues 38 to 59; it reads GGIKYGETPMQAMYRELHEETG.

This sequence belongs to the Nudix hydrolase family. RppH subfamily. Requires a divalent metal cation as cofactor.

Its function is as follows. Accelerates the degradation of transcripts by removing pyrophosphate from the 5'-end of triphosphorylated RNA, leading to a more labile monophosphorylated state that can stimulate subsequent ribonuclease cleavage. This is RNA pyrophosphohydrolase from Burkholderia lata (strain ATCC 17760 / DSM 23089 / LMG 22485 / NCIMB 9086 / R18194 / 383).